Reading from the N-terminus, the 236-residue chain is Lipoprotein signal peptidase (236 aa).

A run of 4 helical transmembrane segments spans residues 8 to 28 (FYGI…WVYF), 44 to 64 (WFKL…FGFT), 68 to 88 (VLLT…IWNL), and 98 to 118 (LLWG…DSIF). Active-site residues include D141 and D174. The chain crosses the membrane as a helical span at residues 166 to 186 (CLPVFNLADVAILAGVALIVL).

The protein belongs to the peptidase A8 family.

Its subcellular location is the cell inner membrane. The enzyme catalyses Release of signal peptides from bacterial membrane prolipoproteins. Hydrolyzes -Xaa-Yaa-Zaa-|-(S,diacylglyceryl)Cys-, in which Xaa is hydrophobic (preferably Leu), and Yaa (Ala or Ser) and Zaa (Gly or Ala) have small, neutral side chains.. The protein operates within protein modification; lipoprotein biosynthesis (signal peptide cleavage). Its function is as follows. This protein specifically catalyzes the removal of signal peptides from prolipoproteins. This Amoebophilus asiaticus (strain 5a2) protein is Lipoprotein signal peptidase.